Consider the following 96-residue polypeptide: Phosphoribosyl-ATP pyrophosphatase (96 aa).

The protein belongs to the PRA-PH family.

The protein localises to the cytoplasm. The enzyme catalyses 1-(5-phospho-beta-D-ribosyl)-ATP + H2O = 1-(5-phospho-beta-D-ribosyl)-5'-AMP + diphosphate + H(+). Its pathway is amino-acid biosynthesis; L-histidine biosynthesis; L-histidine from 5-phospho-alpha-D-ribose 1-diphosphate: step 2/9. The polypeptide is Phosphoribosyl-ATP pyrophosphatase (Methanococcus vannielii (strain ATCC 35089 / DSM 1224 / JCM 13029 / OCM 148 / SB)).